Here is a 397-residue protein sequence, read N- to C-terminus: ATP-dependent RNA helicase RhlB (397 aa).

A Q motif motif is present at residues 9–37; it reads TRFHDFNLAPSLMHAIHDLGFPYCTPIQA. Residues 40–220 form the Helicase ATP-binding domain; sequence LGFTLRGQDA…KQWTVDPAIV (181 aa). 53 to 60 serves as a coordination point for ATP; the sequence is AQTGTGKT. The DEAD box signature appears at 166 to 169; sequence DEAD. Residues 243–393 enclose the Helicase C-terminal domain; sequence DKYKLLYNLV…MPPAELLKPV (151 aa).

This sequence belongs to the DEAD box helicase family. RhlB subfamily. In terms of assembly, component of the RNA degradosome, which is a multiprotein complex involved in RNA processing and mRNA degradation.

The protein resides in the cytoplasm. It catalyses the reaction ATP + H2O = ADP + phosphate + H(+). Functionally, DEAD-box RNA helicase involved in RNA degradation. Has RNA-dependent ATPase activity and unwinds double-stranded RNA. The chain is ATP-dependent RNA helicase RhlB from Pseudomonas aeruginosa (strain UCBPP-PA14).